We begin with the raw amino-acid sequence, 364 residues long: Histidinol-phosphate aminotransferase BQ2027_MB2256C (364 aa).

At Lys-220 the chain carries N6-(pyridoxal phosphate)lysine.

The protein belongs to the class-I pyridoxal-phosphate-dependent aminotransferase family. Monomer. Pyridoxal 5'-phosphate is required as a cofactor.

The protein localises to the secreted. It is found in the cell wall. It catalyses the reaction L-histidinol phosphate + 2-oxoglutarate = 3-(imidazol-4-yl)-2-oxopropyl phosphate + L-glutamate. Aminotransferase that catalyzes the conversion of histidinol phosphate and 2-oxoglutarate into L-glutamate and imidazole acetol phosphate. Might play a significant role in mediating histidine biosynthesis during infection. Facilitates mycobacterial survival and virulence in macrophages. The chain is Histidinol-phosphate aminotransferase BQ2027_MB2256C from Mycobacterium bovis (strain ATCC BAA-935 / AF2122/97).